The chain runs to 593 residues: NADH-quinone oxidoreductase subunit C/D (593 aa).

Residues 1 to 184 are NADH dehydrogenase I subunit C; it reads MTADNAIFIP…DPYSLTLAKQ (184 aa). Residues 208-593 are NADH dehydrogenase I subunit D; it reads DYMFLNLGPN…IDFVMADVDR (386 aa).

It in the N-terminal section; belongs to the complex I 30 kDa subunit family. The protein in the C-terminal section; belongs to the complex I 49 kDa subunit family. As to quaternary structure, NDH-1 is composed of 13 different subunits. Subunits NuoB, CD, E, F, and G constitute the peripheral sector of the complex.

It localises to the cell inner membrane. It catalyses the reaction a quinone + NADH + 5 H(+)(in) = a quinol + NAD(+) + 4 H(+)(out). Functionally, NDH-1 shuttles electrons from NADH, via FMN and iron-sulfur (Fe-S) centers, to quinones in the respiratory chain. The immediate electron acceptor for the enzyme in this species is believed to be ubiquinone. Couples the redox reaction to proton translocation (for every two electrons transferred, four hydrogen ions are translocated across the cytoplasmic membrane), and thus conserves the redox energy in a proton gradient. The protein is NADH-quinone oxidoreductase subunit C/D of Pseudomonas putida (strain W619).